The following is a 466-amino-acid chain: Membrane-bound lytic murein transglycosylase F (466 aa).

The N-terminal stretch at 1-24 is a signal peptide; sequence MKRFKLNYFIIGLIAILLTWSLWT. Residues 25–268 are non-LT domain; it reads TVPWRNAHQD…RLEEKYLGHV (244 aa). The segment at 269–466 is LT domain; it reads GGFDYVDTKT…KEKKAAQLAD (198 aa). Glu-313 is an active-site residue.

The protein in the N-terminal section; belongs to the bacterial solute-binding protein 3 family. It in the C-terminal section; belongs to the transglycosylase Slt family.

The protein resides in the cell outer membrane. It carries out the reaction Exolytic cleavage of the (1-&gt;4)-beta-glycosidic linkage between N-acetylmuramic acid (MurNAc) and N-acetylglucosamine (GlcNAc) residues in peptidoglycan, from either the reducing or the non-reducing ends of the peptidoglycan chains, with concomitant formation of a 1,6-anhydrobond in the MurNAc residue.. In terms of biological role, murein-degrading enzyme that degrades murein glycan strands and insoluble, high-molecular weight murein sacculi, with the concomitant formation of a 1,6-anhydromuramoyl product. Lytic transglycosylases (LTs) play an integral role in the metabolism of the peptidoglycan (PG) sacculus. Their lytic action creates space within the PG sacculus to allow for its expansion as well as for the insertion of various structures such as secretion systems and flagella. This Sodalis glossinidius (strain morsitans) protein is Membrane-bound lytic murein transglycosylase F.